A 181-amino-acid chain; its full sequence is ADP-ribosylation factor 1 (181 aa).

Gly2 carries the N-myristoyl glycine lipid modification. Residues 3–16 form an important for the stable binding to the membranes region; the sequence is LYVSRLFNRLFQKK. GTP contacts are provided by residues 27 to 32, 126 to 129, and Ala160; these read AAGKTT and NKQD.

The protein belongs to the small GTPase superfamily. Arf family. In terms of assembly, may interact with GTPase RAB5b.

It localises to the golgi apparatus membrane. It carries out the reaction GTP + H2O = GDP + phosphate + H(+). Its activity is regulated as follows. Alternates between an inactive GDP-bound form and an active GTP-bound form. Intrinsic GTPase activity is almost undetectable in vitro. Activated by a guanine nucleotide-exchange factor (GEF) and inactivated by GTPase-activating protein ARFGAP1. Its function is as follows. Small GTPase involved in protein trafficking between different compartments. Modulates vesicle budding and uncoating within the Golgi complex. In its GTP-bound form, triggers the recruitment of coatomer proteins to the Golgi membrane. The hydrolysis of ARF1-bound GTP, which is mediated by ARFGAPs proteins, is required for dissociation of coat proteins from Golgi membranes and vesicles. Regulates the transport of N-acylated AK2 to the parasitophorous vacuole membrane. May be involved in the activation of lipid kinase PIP5K. The protein is ADP-ribosylation factor 1 of Plasmodium falciparum (isolate 3D7).